A 349-amino-acid polypeptide reads, in one-letter code: 5-deoxyribose 1-phosphate isomerase (349 aa).

Residues 49–51 (RGA), Arg-92, and Gln-199 each bind substrate. Asp-240 serves as the catalytic Proton donor. 250–251 (NK) serves as a coordination point for substrate.

Belongs to the EIF-2B alpha/beta/delta subunits family. DrdI subfamily.

The catalysed reaction is 5-deoxy-alpha-D-ribose 1-phosphate = 5-deoxy-D-ribulose 1-phosphate. The protein operates within carbohydrate degradation. Its function is as follows. Catalyzes the isomerization of 5-deoxy-alpha-D-ribose 1-phosphate to 5-deoxy-D-ribulose 1-phosphate, as part of a 5-deoxyribose salvage pathway that recycles this toxic radical SAM enzyme by-product to mainstream metabolites. This Clostridium botulinum (strain ATCC 19397 / Type A) protein is 5-deoxyribose 1-phosphate isomerase.